A 144-amino-acid chain; its full sequence is 3-dehydroquinate dehydratase (144 aa).

Catalysis depends on Tyr22, which acts as the Proton acceptor. 3 residues coordinate substrate: Asn71, His77, and Asp84. The active-site Proton donor is the His97. Substrate is bound by residues 98 to 99 (IS) and Arg108.

The protein belongs to the type-II 3-dehydroquinase family. In terms of assembly, homododecamer.

It carries out the reaction 3-dehydroquinate = 3-dehydroshikimate + H2O. Its pathway is metabolic intermediate biosynthesis; chorismate biosynthesis; chorismate from D-erythrose 4-phosphate and phosphoenolpyruvate: step 3/7. Functionally, catalyzes a trans-dehydration via an enolate intermediate. This chain is 3-dehydroquinate dehydratase (aroQ), found in Thermotoga maritima (strain ATCC 43589 / DSM 3109 / JCM 10099 / NBRC 100826 / MSB8).